The following is a 741-amino-acid chain: Methionine--tRNA ligase (741 aa).

Residues 1–22 (MTMKQYTMSKMNAETQTQTRES) are compositionally biased toward polar residues. The disordered stretch occupies residues 1–25 (MTMKQYTMSKMNAETQTQTRESFPT). Residues 36 to 46 (PYANGDLHIGH) carry the 'HIGH' region motif. C167, C170, C179, and C183 together coordinate Zn(2+). Residues 309–329 (VRSHSSSSAKDSSEGNSPSNI) form a disordered region. The segment covering 311–329 (SHSSSSAKDSSEGNSPSNI) has biased composition (low complexity). An ATP-binding site is contributed by T381. The disordered stretch occupies residues 591–629 (KLADRVTDPTDDDDSDTDTETGTDVAETTNESHSESNMT). A compositionally biased stretch (acidic residues) spans 599–611 (PTDDDDSDTDTET). The segment covering 616-629 (AETTNESHSESNMT) has biased composition (polar residues). Residues 643–741 (EFEELDLRVA…EDADPGTSIQ (99 aa)) enclose the tRNA-binding domain.

Belongs to the class-I aminoacyl-tRNA synthetase family. MetG type 1 subfamily. Homodimer. Zn(2+) is required as a cofactor.

The protein localises to the cytoplasm. It catalyses the reaction tRNA(Met) + L-methionine + ATP = L-methionyl-tRNA(Met) + AMP + diphosphate. In terms of biological role, is required not only for elongation of protein synthesis but also for the initiation of all mRNA translation through initiator tRNA(fMet) aminoacylation. This Haloquadratum walsbyi (strain DSM 16790 / HBSQ001) protein is Methionine--tRNA ligase.